The following is a 479-amino-acid chain: FAD-dependent monooxygenase cdmI (479 aa).

Residues Glu43, Gly57, and Arg116 each contribute to the FAD site. 2 N-linked (GlcNAc...) asparagine glycosylation sites follow: Asn156 and Asn198. FAD is bound by residues Asp315 and Ala328. The helical transmembrane segment at 453-473 threads the bilayer; the sequence is PFILAVLAGLGFLLTMFKQQW.

Belongs to the paxM FAD-dependent monooxygenase family. FAD serves as cofactor.

Its subcellular location is the membrane. It catalyses the reaction verruculide C + AH2 + O2 = verruculide C epoxide + A + H2O. It participates in secondary metabolite biosynthesis; terpenoid biosynthesis. In terms of biological role, FAD-dependent monooxygenase; part of the gene cluster that mediates the biosynthesis of chrodrimanin B, a meroterpenoid that acts as a potent blocker of insect GABA-gated chloride channels. The first step of the pathway is the biosynthesis of 6-hydroxymellein by the polyketide synthase cdmE. The prenyltransferase cdmH acts as a 6-hydroxymellein 5-farnesyltransferase and produces the hydrophobic metabolite verruculide C. The FAD-dependent monooxygenase cdmI further converts verruculide C into verruculide B. The terpene cyclase cdmG then produced the pentacyclic molecule 3-hydroxypentacecilide A, the backbone structure of chrodrimanin B, via folding the farnesyl moiety of the substrate into the chair-boat conformation. The short-chain dehydrogenase/reductase cdmF functions as the 3-OH dehydrogenase that oxidizes the C-3 hydroxyl group of 3-hydroxypentacecilide A and produces chrodrimanin C, the dehydrogenated product of 3-hydroxypentacecilide A. The cytochrome P450 monooxygenase cdmJ then accepts both 3-hydroxypentacecilide A and chrodrimanin C and functions as a C-7-beta-hydroxylase to produce respectively chrodrimanin H and chrodrimanin F. The dioxygenase cdmA accepts chrodrimanin H to afford chrodrimanin E, which is further transformed to chrodrimanin A by the dioxygenase cdmD. CdmA can also accept chrodrimanin C as substrate to convert it into verruculide A, which is further converted into chrodrimanin T by cdmD. The last step of the biosynthesis is proposed to be performed by the acetyltransferase cdmC which acetylates chrodrimanin A to yield chrodrimanin B. The pathway may also lead to the production of additional shunt products, including chrodrimanins T and U. The polypeptide is FAD-dependent monooxygenase cdmI (Talaromyces verruculosus (Penicillium verruculosum)).